Consider the following 109-residue polypeptide: uncharacterized protein (109 aa).

The next 2 helical transmembrane spans lie at 19-39 (LELV…CLIP) and 53-73 (YFID…FYPF).

Its subcellular location is the membrane. This is an uncharacterized protein from Saccharomyces cerevisiae (strain ATCC 204508 / S288c) (Baker's yeast).